Consider the following 377-residue polypeptide: tRNA N6-adenosine threonylcarbamoyltransferase (377 aa).

H129 and H133 together coordinate Fe cation. Residues 151-155 (LVSGG), D184, G197, and N298 each bind substrate. D326 contributes to the Fe cation binding site. The interval 358–377 (DGAAAKSDPAIGSGRKGPKA) is disordered.

The protein belongs to the KAE1 / TsaD family. It depends on Fe(2+) as a cofactor.

The protein resides in the cytoplasm. It catalyses the reaction L-threonylcarbamoyladenylate + adenosine(37) in tRNA = N(6)-L-threonylcarbamoyladenosine(37) in tRNA + AMP + H(+). In terms of biological role, required for the formation of a threonylcarbamoyl group on adenosine at position 37 (t(6)A37) in tRNAs that read codons beginning with adenine. Is involved in the transfer of the threonylcarbamoyl moiety of threonylcarbamoyl-AMP (TC-AMP) to the N6 group of A37, together with TsaE and TsaB. TsaD likely plays a direct catalytic role in this reaction. In Maricaulis maris (strain MCS10) (Caulobacter maris), this protein is tRNA N6-adenosine threonylcarbamoyltransferase.